Reading from the N-terminus, the 129-residue chain is UPF0102 protein RD1_1191 (129 aa).

The protein belongs to the UPF0102 family.

The polypeptide is UPF0102 protein RD1_1191 (Roseobacter denitrificans (strain ATCC 33942 / OCh 114) (Erythrobacter sp. (strain OCh 114))).